The following is a 754-amino-acid chain: 17S U2 SnRNP complex component HTATSF1 (754 aa).

2 disordered regions span residues 1 to 53 and 81 to 122; these read MSGT…YEWD and GASS…KAES. Position 2 is an N-acetylserine (serine 2). Residues 90-122 are compositionally biased toward basic and acidic residues; the sequence is EDVHARTAEEPPQEKAPEPTDPRKKGEKRKAES. RRM domains follow at residues 133 to 218 and 264 to 349; these read TNVY…VAKF and RVVI…AWDG. The interval 259–353 is U2AF homology motif (UHM); the sequence is RMRHERVVII…AQAWDGTTDY (95 aa). Lysine 297 carries the post-translational modification N6-acetyllysine. Residues 380 to 415 form a disordered region; that stretch reads RGLRRSDSVSASERAGPSRARHFSEHPSTSKMNAQE. Residues 381–754 form a mediates interaction with the P-TEFb complex region; the sequence is GLRRSDSVSA…ILSSDDDDDI (374 aa). Phosphoserine occurs at positions 387, 403, 407, and 409. Positions 405–415 are enriched in polar residues; sequence HPSTSKMNAQE. Glycyl lysine isopeptide (Lys-Gly) (interchain with G-Cter in SUMO2) cross-links involve residues lysine 429 and lysine 430. Residues 433-754 form a disordered region; the sequence is KTEDGGEFEE…ILSSDDDDDI (322 aa). Residues serine 445, serine 452, and serine 453 each carry the phosphoserine modification. Positions 462–476 are enriched in basic and acidic residues; that stretch reads CPGKESEEGCPKRGF. Phosphoserine occurs at positions 481, 485, 494, 498, 521, and 529. The segment covering 508-538 has biased composition (basic and acidic residues); the sequence is LRNDCEENGFAKESEDDPNKESEEEVGPTKE. The segment covering 539 to 552 has biased composition (acidic residues); it reads SEEDDSEKESDEDC. The segment covering 553–563 has biased composition (basic and acidic residues); that stretch reads SEKQSEDGSER. Residues serine 557, serine 561, and serine 579 each carry the phosphoserine modification. Acidic residues predominate over residues 564–579; sequence EFEENGLEKDLDEEGS. The span at 580–590 shows a compositional bias: basic and acidic residues; the sequence is EKELHENVLDK. Residues 591-606 show a composition bias toward acidic residues; it reads ELEENDSENSEFEDDG. Serine 597, serine 600, serine 607, serine 616, and serine 624 each carry phosphoserine. 2 stretches are compositionally biased toward acidic residues: residues 613–633 and 640–651; these read EEGS…EEDT and DESNEKEDEEYA. The residue at position 633 (threonine 633) is a Phosphothreonine. At serine 642 the chain carries Phosphoserine. Over residues 652 to 674 the composition is skewed to basic and acidic residues; the sequence is DEKGLEAADKKEEEGDADEKLFE. Residues 675–713 are compositionally biased toward acidic residues; it reads ESDDKEDEDADGKEVEDADEKLFEDDDSNEKLFDEEEDS. Residues serine 676, serine 702, serine 713, serine 721, and serine 748 each carry the phosphoserine modification. Basic and acidic residues predominate over residues 714–725; the sequence is NEKLFDDSDERG.

This sequence belongs to the HTATSF1 family. Component of the 17S U2 SnRNP complex, a ribonucleoprotein complex that contains small nuclear RNA (snRNA) U2 and a number of specific proteins. Within the 17S U2 SnRNP complex, interacts (via UHM region) directly with SF3B1. Component of a complex which is at least composed of HTATSF1/Tat-SF1, the P-TEFb complex components CDK9 and CCNT1, RNA polymerase II, SUPT5H, and NCL/nucleolin. Interacts with GTF2F2/RAP30 and POLR2A. Interacts with TCERG1/CA150. Interacts with (poly-ADP-ribosylated) RPA1; promoting HTATSF1 recruitment to DNA damage sites. Interacts (when phosphorylated) with TOPBP1; promoting recruitment of TOPBP1 to DNA damage sites during S-phase. Phosphorylation at Ser-748 by CK2 during S-phase in response to DNA damage promotes interaction with TOPBP1 and double-strand break (DSB) repair via homologous recombination.

It localises to the nucleus. It is found in the chromosome. In terms of biological role, component of the 17S U2 SnRNP complex of the spliceosome, a large ribonucleoprotein complex that removes introns from transcribed pre-mRNAs. The 17S U2 SnRNP complex (1) directly participates in early spliceosome assembly and (2) mediates recognition of the intron branch site during pre-mRNA splicing by promoting the selection of the pre-mRNA branch-site adenosine, the nucleophile for the first step of splicing. Within the 17S U2 SnRNP complex, HTATSF1 is required to stabilize the branchpoint-interacting stem loop. HTATSF1 is displaced from the 17S U2 SnRNP complex before the stable addition of the 17S U2 SnRNP complex to the spliceosome, destabilizing the branchpoint-interacting stem loop and allowing to probe intron branch site sequences. Also acts as a regulator of transcriptional elongation, possibly by mediating the reciprocal stimulatory effect of splicing on transcriptional elongation. Involved in double-strand break (DSB) repair via homologous recombination in S-phase by promoting the recruitment of TOPBP1 to DNA damage sites. Mechanistically, HTATSF1 is (1) recruited to DNA damage sites in S-phase via interaction with poly-ADP-ribosylated RPA1 and (2) phosphorylated by CK2, promoting recruitment of TOPBP1, thereby facilitating RAD51 nucleofilaments formation and RPA displacement, followed by homologous recombination. The protein is 17S U2 SnRNP complex component HTATSF1 (HTATSF1) of Pongo abelii (Sumatran orangutan).